Consider the following 1650-residue polypeptide: Phosphatidylinositol 3,4,5-trisphosphate-dependent Rac exchanger 1 protein (1650 aa).

Over residues 1–19 (MEAPGSGGGDGGGDPGGDG) the composition is skewed to gly residues. The tract at residues 1–33 (MEAPGSGGGDGGGDPGGDGAHPDARGPVSGPCA) is disordered. The DH domain maps to 44–235 (LRLCVLNEIL…KTVCSNINET (192 aa)). The PH domain maps to 266-387 (ELLLQGNLLK…WLDALIRERE (122 aa)). Position 314 is a phosphoserine (S314). DEP domains are found at residues 416-491 (MSKK…RFRY) and 518-592 (SLYA…RFHA). Positions 620 to 698 (RLLIPPQEDD…SRRPLRLLVA (79 aa)) constitute a PDZ domain. The disordered stretch occupies residues 793 to 813 (ARASQGAPDEDPQEDDQPDSA). Positions 800-810 (PDEDPQEDDQP) are enriched in acidic residues. S991 carries the phosphoserine modification. 2 disordered regions span residues 1022-1047 (SPAV…GAPS) and 1099-1129 (PTSA…EVDR). Residues 1030 to 1047 (QGQGLNDSSYGSASGAPS) show a composition bias toward polar residues. The span at 1109–1122 (PSLVEETSSSPPVS) shows a compositional bias: low complexity. S1186 and S1191 each carry phosphoserine.

As to quaternary structure, interacts preferentially with RAC2. Interacts with RAC1. Interacts with AUTS2.

The protein localises to the cytoplasm. The protein resides in the cytosol. It is found in the cell membrane. Functions as a RAC guanine nucleotide exchange factor (GEF), which activates the Rac proteins by exchanging bound GDP for free GTP. Its activity is synergistically activated by phosphatidylinositol 3,4,5-trisphosphate and the beta gamma subunits of heterotrimeric G protein. May function downstream of heterotrimeric G proteins in neutrophils. The chain is Phosphatidylinositol 3,4,5-trisphosphate-dependent Rac exchanger 1 protein (Prex1) from Mus musculus (Mouse).